The sequence spans 203 residues: ATP phosphoribosyltransferase (203 aa).

Belongs to the ATP phosphoribosyltransferase family. Short subfamily. In terms of assembly, heteromultimer composed of HisG and HisZ subunits.

The protein resides in the cytoplasm. It catalyses the reaction 1-(5-phospho-beta-D-ribosyl)-ATP + diphosphate = 5-phospho-alpha-D-ribose 1-diphosphate + ATP. It functions in the pathway amino-acid biosynthesis; L-histidine biosynthesis; L-histidine from 5-phospho-alpha-D-ribose 1-diphosphate: step 1/9. In terms of biological role, catalyzes the condensation of ATP and 5-phosphoribose 1-diphosphate to form N'-(5'-phosphoribosyl)-ATP (PR-ATP). Has a crucial role in the pathway because the rate of histidine biosynthesis seems to be controlled primarily by regulation of HisG enzymatic activity. The protein is ATP phosphoribosyltransferase of Campylobacter fetus subsp. fetus (strain 82-40).